Consider the following 90-residue polypeptide: UPF0223 protein LMHCC_1569 (90 aa).

The protein belongs to the UPF0223 family.

The sequence is that of UPF0223 protein LMHCC_1569 from Listeria monocytogenes serotype 4a (strain HCC23).